The chain runs to 218 residues: Methylthioribulose-1-phosphate dehydratase (218 aa).

2 residues coordinate Zn(2+): His107 and His109.

The protein belongs to the aldolase class II family. MtnB subfamily. Requires Zn(2+) as cofactor.

It catalyses the reaction 5-(methylsulfanyl)-D-ribulose 1-phosphate = 5-methylsulfanyl-2,3-dioxopentyl phosphate + H2O. It participates in amino-acid biosynthesis; L-methionine biosynthesis via salvage pathway; L-methionine from S-methyl-5-thio-alpha-D-ribose 1-phosphate: step 2/6. Its function is as follows. Catalyzes the dehydration of methylthioribulose-1-phosphate (MTRu-1-P) into 2,3-diketo-5-methylthiopentyl-1-phosphate (DK-MTP-1-P). In Xylella fastidiosa (strain M12), this protein is Methylthioribulose-1-phosphate dehydratase.